Here is a 532-residue protein sequence, read N- to C-terminus: Protein tweety homolog 2 (532 aa).

The Extracellular segment spans residues 1–44 (MPAARVEYIAPWWVVWLHSVPHLGLRLQRVDSTFSPGDETYQES). Residues 45 to 65 (LLFLGVLAAIGLGLNLIFLTV) form a helical membrane-spanning segment. The Cytoplasmic segment spans residues 66 to 87 (YLVCTCCCRRDHTVQTKQQESC). A helical membrane pass occupies residues 88–108 (CVTWTAVVAGLLCCAAVGVGF). Residues 109 to 213 (YGNSETNDGM…QTAYVEYYRW (105 aa)) are Extracellular-facing. Ca(2+) is bound by residues E113 and D116. The N-linked (GlcNAc...) asparagine glycan is linked to N129. The RGD motif lies at 164-166 (RGD). At T199 the chain carries Phosphothreonine. The helical transmembrane segment at 214-234 (LSYLLLFILDLVICLVTCLGL) threads the bilayer. Residues 235 to 240 (ARRSKC) lie on the Cytoplasmic side of the membrane. Residues 241 to 261 (LLASMLCCGILTLILSWASLA) form a helical membrane-spanning segment. Over 262-385 (ADAAAAVGTS…DALTGICYDG (124 aa)) the chain is Extracellular. Disulfide bonds link C274/C382 and C300/C367. N283 and N352 each carry an N-linked (GlcNAc...) asparagine glycan. Residues 386–406 (IEGLLFLGLFSLLAALAFSTL) traverse the membrane as a helical segment. Topologically, residues 407-532 (TCAGPRAWKY…EHLRHYEFPS (126 aa)) are cytoplasmic. Phosphoserine is present on S504. The PY-motif; mediates interaction with NEDD4L signature appears at 506 to 509 (PPTY).

This sequence belongs to the tweety family. As to quaternary structure, forms cis-homodimers in the presence of Ca(+2) and forms monomers and trans-dimers in the absence of Ca(2+). Interacts with NEDD4L. In terms of processing, ubiquitinated by NEDD4L, leading to its proteasomal degradation.

It is found in the cell membrane. It carries out the reaction chloride(in) = chloride(out). The catalysed reaction is L-glutamate(out) = L-glutamate(in). Inhibited by (4-[(2-butyl-6,7-dichloro-2- cyclopentyl-2,3-dihydro-1-oxo-1H-inden-5-yl)oxy]butanoic acid). Its function is as follows. Calcium-independent, swelling-dependent volume-regulated anion channel (VRAC-swell) which plays a pivotal role in the process of regulatory volume decrease (RVD) in the brain through the efflux of anions like chloride and organic osmolytes like glutamate. Probable large-conductance Ca(2+)-activated chloride channel. The polypeptide is Protein tweety homolog 2 (Ttyh2) (Mus musculus (Mouse)).